A 592-amino-acid polypeptide reads, in one-letter code: Inactive metallocarboxypeptidase ecm14 (592 aa).

The first 22 residues, 1–22, serve as a signal peptide directing secretion; the sequence is MYRQDHVFVVLCAVLLAGQVTA. A propeptide spanning residues 23-175 is cleaved from the precursor; it reads VPAGTGINPH…AIYESRYPTR (153 aa). The 322-residue stretch at 203-524 folds into the Peptidase M14 domain; it reads HYQPFNVILQ…NSVLVLGHFL (322 aa). Zn(2+) is bound by residues His-267 and Glu-270. Residues 267 to 270, Arg-325, and 342 to 343 contribute to the substrate site; these read HARE and DR. A disulfide bridge links Cys-336 with Cys-359. Residue Asn-383 is glycosylated (N-linked (GlcNAc...) asparagine). His-399 is a Zn(2+) binding site. 400–401 is a binding site for substrate; the sequence is SY. N-linked (GlcNAc...) asparagine glycosylation occurs at Asn-548.

Belongs to the peptidase M14 family. Zn(2+) is required as a cofactor.

Its subcellular location is the vacuole. The protein resides in the secreted. Inactive carboxypeptidase that may play a role in cell wall organization and biogenesis. The polypeptide is Inactive metallocarboxypeptidase ecm14 (ecm14) (Talaromyces stipitatus (strain ATCC 10500 / CBS 375.48 / QM 6759 / NRRL 1006) (Penicillium stipitatum)).